Here is a 465-residue protein sequence, read N- to C-terminus: Ribulose bisphosphate carboxylase large chain (465 aa).

Position 4 is an N6,N6,N6-trimethyllysine (K4). Substrate-binding residues include N113 and T163. K165 serves as the catalytic Proton acceptor. K167 is a binding site for substrate. Residues K191, D193, and E194 each contribute to the Mg(2+) site. N6-carboxylysine is present on K191. Catalysis depends on H284, which acts as the Proton acceptor. Residues R285, H317, and S369 each coordinate substrate.

This sequence belongs to the RuBisCO large chain family. Type I subfamily. As to quaternary structure, heterohexadecamer of 8 large chains and 8 small chains; disulfide-linked. The disulfide link is formed within the large subunit homodimers. It depends on Mg(2+) as a cofactor. In terms of processing, the disulfide bond which can form in the large chain dimeric partners within the hexadecamer appears to be associated with oxidative stress and protein turnover.

Its subcellular location is the plastid. It is found in the chloroplast. It carries out the reaction 2 (2R)-3-phosphoglycerate + 2 H(+) = D-ribulose 1,5-bisphosphate + CO2 + H2O. The enzyme catalyses D-ribulose 1,5-bisphosphate + O2 = 2-phosphoglycolate + (2R)-3-phosphoglycerate + 2 H(+). Functionally, ruBisCO catalyzes two reactions: the carboxylation of D-ribulose 1,5-bisphosphate, the primary event in carbon dioxide fixation, as well as the oxidative fragmentation of the pentose substrate in the photorespiration process. Both reactions occur simultaneously and in competition at the same active site. This is Ribulose bisphosphate carboxylase large chain from Acer saccharum (Sugar maple).